The chain runs to 475 residues: Eukaryotic translation initiation factor 3 subunit L (475 aa).

Residues 257–451 (DAIRMFSHIL…DLDYAMQGDL (195 aa)) form the PCI domain.

This sequence belongs to the eIF-3 subunit L family. In terms of assembly, component of the eukaryotic translation initiation factor 3 (eIF-3) complex.

The protein resides in the cytoplasm. Functionally, component of the eukaryotic translation initiation factor 3 (eIF-3) complex, which is involved in protein synthesis of a specialized repertoire of mRNAs and, together with other initiation factors, stimulates binding of mRNA and methionyl-tRNAi to the 40S ribosome. The eIF-3 complex specifically targets and initiates translation of a subset of mRNAs involved in cell proliferation. This is Eukaryotic translation initiation factor 3 subunit L from Sclerotinia sclerotiorum (strain ATCC 18683 / 1980 / Ss-1) (White mold).